The chain runs to 101 residues: Urease subunit beta (101 aa).

Belongs to the urease beta subunit family. As to quaternary structure, heterotrimer of UreA (gamma), UreB (beta) and UreC (alpha) subunits. Three heterotrimers associate to form the active enzyme.

The protein localises to the cytoplasm. It catalyses the reaction urea + 2 H2O + H(+) = hydrogencarbonate + 2 NH4(+). Its pathway is nitrogen metabolism; urea degradation; CO(2) and NH(3) from urea (urease route): step 1/1. This is Urease subunit beta from Sinorhizobium fredii (strain NBRC 101917 / NGR234).